The following is a 211-amino-acid chain: Phosphoribosyl-dephospho-CoA transferase (211 aa).

Catalysis depends on residues aspartate 136 and aspartate 138.

This sequence belongs to the MdcG family.

The catalysed reaction is apo-[malonate decarboxylase ACP] + 2'-(5''-triphospho-alpha-D-ribosyl)-3'-dephospho-CoA = holo-[malonate decarboxylase ACP] + diphosphate. Functionally, transfers 2'-(5-triphosphoribosyl)-3'-dephosphocoenzyme-A to the apo-[acyl-carrier-protein] of the malonate decarboxylase to yield holo-[acyl-carrier-protein]. This chain is Phosphoribosyl-dephospho-CoA transferase, found in Pseudomonas syringae pv. tomato (strain ATCC BAA-871 / DC3000).